We begin with the raw amino-acid sequence, 161 residues long: SsrA-binding protein (161 aa).

It belongs to the SmpB family.

The protein resides in the cytoplasm. In terms of biological role, required for rescue of stalled ribosomes mediated by trans-translation. Binds to transfer-messenger RNA (tmRNA), required for stable association of tmRNA with ribosomes. tmRNA and SmpB together mimic tRNA shape, replacing the anticodon stem-loop with SmpB. tmRNA is encoded by the ssrA gene; the 2 termini fold to resemble tRNA(Ala) and it encodes a 'tag peptide', a short internal open reading frame. During trans-translation Ala-aminoacylated tmRNA acts like a tRNA, entering the A-site of stalled ribosomes, displacing the stalled mRNA. The ribosome then switches to translate the ORF on the tmRNA; the nascent peptide is terminated with the 'tag peptide' encoded by the tmRNA and targeted for degradation. The ribosome is freed to recommence translation, which seems to be the essential function of trans-translation. The protein is SsrA-binding protein of Psychromonas ingrahamii (strain DSM 17664 / CCUG 51855 / 37).